Reading from the N-terminus, the 217-residue chain is ATP-dependent Clp protease proteolytic subunit 2 (217 aa).

Catalysis depends on Ser-113, which acts as the Nucleophile. Residue His-138 is part of the active site.

The protein belongs to the peptidase S14 family. In terms of assembly, fourteen ClpP subunits assemble into 2 heptameric rings which stack back to back to give a disk-like structure with a central cavity, resembling the structure of eukaryotic proteasomes.

It is found in the cytoplasm. It catalyses the reaction Hydrolysis of proteins to small peptides in the presence of ATP and magnesium. alpha-casein is the usual test substrate. In the absence of ATP, only oligopeptides shorter than five residues are hydrolyzed (such as succinyl-Leu-Tyr-|-NHMec, and Leu-Tyr-Leu-|-Tyr-Trp, in which cleavage of the -Tyr-|-Leu- and -Tyr-|-Trp bonds also occurs).. Its function is as follows. Cleaves peptides in various proteins in a process that requires ATP hydrolysis. Has a chymotrypsin-like activity. Plays a major role in the degradation of misfolded proteins. This chain is ATP-dependent Clp protease proteolytic subunit 2, found in Frankia casuarinae (strain DSM 45818 / CECT 9043 / HFP020203 / CcI3).